We begin with the raw amino-acid sequence, 626 residues long: Interferon-induced GTP-binding protein MxC (626 aa).

In terms of domain architecture, Dynamin-type G spans 40–313; the sequence is DLNLPAIAVI…LVEHIAKNVP (274 aa). The segment at 50-57 is G1 motif; it reads GDQSSGKS. 50–57 is a GTP binding site; it reads GDQSSGKS. The tract at residues 75–77 is G2 motif; that stretch reads VTR. The G3 motif stretch occupies residues 151-154; that stretch reads DLPG. Residues 151 to 155 and 220 to 223 each bind GTP; these read DLPGI and TKPD. A G4 motif region spans residues 220 to 223; sequence TKPD. A G5 motif region spans residues 252–255; the sequence is KCRG. The 91-residue stretch at 534-624 folds into the GED domain; that stretch reads LRETAFHLTS…ALPKVVHSAN (91 aa).

This sequence belongs to the TRAFAC class dynamin-like GTPase superfamily. Dynamin/Fzo/YdjA family.

Its subcellular location is the cytoplasm. This chain is Interferon-induced GTP-binding protein MxC (mxc), found in Danio rerio (Zebrafish).